The chain runs to 380 residues: Erythronate-4-phosphate dehydrogenase (380 aa).

S45 and T66 together coordinate substrate. D146 and T174 together coordinate NAD(+). R207 is an active-site residue. An NAD(+)-binding site is contributed by D231. Residue E236 is part of the active site. Residue H253 is the Proton donor of the active site. Residue G256 participates in NAD(+) binding. Y257 serves as a coordination point for substrate.

This sequence belongs to the D-isomer specific 2-hydroxyacid dehydrogenase family. PdxB subfamily. In terms of assembly, homodimer.

Its subcellular location is the cytoplasm. It catalyses the reaction 4-phospho-D-erythronate + NAD(+) = (R)-3-hydroxy-2-oxo-4-phosphooxybutanoate + NADH + H(+). It functions in the pathway cofactor biosynthesis; pyridoxine 5'-phosphate biosynthesis; pyridoxine 5'-phosphate from D-erythrose 4-phosphate: step 2/5. Functionally, catalyzes the oxidation of erythronate-4-phosphate to 3-hydroxy-2-oxo-4-phosphonooxybutanoate. In Pseudomonas fluorescens (strain Pf0-1), this protein is Erythronate-4-phosphate dehydrogenase.